A 323-amino-acid chain; its full sequence is DNA-directed RNA polymerase subunit alpha (323 aa).

The alpha N-terminal domain (alpha-NTD) stretch occupies residues 1–225; the sequence is MLDIAMPKIE…QYSQTIADFN (225 aa). The segment at 243–323 is alpha C-terminal domain (alpha-CTD); sequence PADIYDTPIE…TNSSPAGIES (81 aa).

It belongs to the RNA polymerase alpha chain family. As to quaternary structure, homodimer. The RNAP catalytic core consists of 2 alpha, 1 beta, 1 beta' and 1 omega subunit. When a sigma factor is associated with the core the holoenzyme is formed, which can initiate transcription.

It carries out the reaction RNA(n) + a ribonucleoside 5'-triphosphate = RNA(n+1) + diphosphate. Its function is as follows. DNA-dependent RNA polymerase catalyzes the transcription of DNA into RNA using the four ribonucleoside triphosphates as substrates. This is DNA-directed RNA polymerase subunit alpha from Roseiflexus castenholzii (strain DSM 13941 / HLO8).